A 28-amino-acid chain; its full sequence is Cyclotide ltri-A (28 aa).

Residues 1-28 constitute a cross-link (cyclopeptide (Gly-Asn)); the sequence is GVACGESCVYLPCFTVGCTCTSSQCFKN. Cystine bridges form between Cys-4–Cys-18, Cys-8–Cys-20, and Cys-13–Cys-25.

The protein belongs to the cyclotide family. Bracelet subfamily. Post-translationally, this is a cyclic peptide.

Probably participates in a plant defense mechanism. The sequence is that of Cyclotide ltri-A from Leonia triandra.